The sequence spans 556 residues: Potassium-transporting ATPase potassium-binding subunit (556 aa).

The next 10 membrane-spanning stretches (helical) occupy residues 6–26 (AGILFALSLALALAAVHVPLG), 65–85 (SVLAFSAVSILFLFGLQLLQG), 133–153 (GLSVQNFVSAAVGMAVAMAFV), 176–196 (LRILLPLSIIGAIILVSGGVI), 249–269 (PTTWTNWVEIFLLSCIAFSLP), 283–303 (AAILAVMAVIATLSLSLMMLF), 378–398 (GLYSMLVLAVITVFVAGLMVG), 419–439 (YFLVTPLIVLIGTAVAMALPG), 483–503 (ALGLAMVFGRFLPIILVLALA), and 526–546 (FVGMVTGVTLILVALTFLPVL).

This sequence belongs to the KdpA family. The system is composed of three essential subunits: KdpA, KdpB and KdpC.

The protein localises to the cell membrane. Functionally, part of the high-affinity ATP-driven potassium transport (or Kdp) system, which catalyzes the hydrolysis of ATP coupled with the electrogenic transport of potassium into the cytoplasm. This subunit binds the extracellular potassium ions and delivers the ions to the membrane domain of KdpB through an intramembrane tunnel. This chain is Potassium-transporting ATPase potassium-binding subunit, found in Mycobacterium sp. (strain KMS).